Reading from the N-terminus, the 318-residue chain is Myoblast determination protein 1 (318 aa).

Met1 is covalently cross-linked (Peptide (Met-Gly) (interchain with G-Cter in ubiquitin)). Lys104 is modified (N6-methyllysine; by EHMT2). Residues 109-160 (DRRKAATMRERRRLSKVNEAFETLKRCTSSNPNQRLPKVEILRNAIRYIEGL) form the bHLH domain. Disordered regions lie at residues 175 to 224 (AAFY…RQNG) and 262 to 318 (SPAA…YQVL). Positions 196–206 (SDASSPRSNCS) are enriched in polar residues. Low complexity predominate over residues 262–271 (SPAAPSLLLP). Positions 272 to 282 (DAPPESPPGPP) are enriched in pro residues. Residues 290 to 304 (AEQGTQTPSPDSTPQ) show a composition bias toward polar residues.

In terms of assembly, efficient DNA binding requires dimerization with another bHLH protein. Seems to form active heterodimers with ITF-2. Interacts with SUV39H1. Interacts with DDX5. Interacts with CHD2. Interacts with TSC22D3. Interacts with SETD3. Interacts with P-TEFB complex; promotes the transcriptional activity of MYOD1 through its CDK9-mediated phosphorylation. Interacts with CSRP3. Interacts with NUPR1. In terms of processing, phosphorylated by CDK9. This phosphorylation promotes its function in muscle differentiation. Post-translationally, acetylated by a complex containing EP300 and PCAF. The acetylation is essential to activate target genes. Conversely, its deacetylation by SIRT1 inhibits its function. Ubiquitinated on the N-terminus; which is required for proteasomal degradation. In terms of processing, methylation at Lys-104 by EHMT2/G9a inhibits myogenic activity.

It localises to the nucleus. In terms of biological role, acts as a transcriptional activator that promotes transcription of muscle-specific target genes and plays a role in muscle differentiation. Together with MYF5 and MYOG, co-occupies muscle-specific gene promoter core region during myogenesis. Induces fibroblasts to differentiate into myoblasts. Interacts with and is inhibited by the twist protein. This interaction probably involves the basic domains of both proteins. This chain is Myoblast determination protein 1 (Myod1), found in Rattus norvegicus (Rat).